A 97-amino-acid chain; its full sequence is Large ribosomal subunit protein bL28 (97 aa).

Belongs to the bacterial ribosomal protein bL28 family.

In Rickettsia felis (strain ATCC VR-1525 / URRWXCal2) (Rickettsia azadi), this protein is Large ribosomal subunit protein bL28.